The sequence spans 149 residues: Arginine regulator (149 aa).

This sequence belongs to the ArgR family.

The protein localises to the cytoplasm. Its pathway is amino-acid degradation; L-arginine degradation via ADI pathway. In terms of biological role, regulates the transcription of the arc operon, involved in arginine catabolism. This chain is Arginine regulator (argR1), found in Bacillus cereus (strain ATCC 14579 / DSM 31 / CCUG 7414 / JCM 2152 / NBRC 15305 / NCIMB 9373 / NCTC 2599 / NRRL B-3711).